Here is a 491-residue protein sequence, read N- to C-terminus: Glutamate--tRNA ligase (491 aa).

The 'HIGH' region signature appears at 9 to 19 (PSPTGTPHVGM). The 'KMSKS' region motif lies at 253 to 257 (KLSKR). Lysine 256 is a binding site for ATP.

This sequence belongs to the class-I aminoacyl-tRNA synthetase family. Glutamate--tRNA ligase type 1 subfamily. Monomer.

Its subcellular location is the cytoplasm. It carries out the reaction tRNA(Glu) + L-glutamate + ATP = L-glutamyl-tRNA(Glu) + AMP + diphosphate. In terms of biological role, catalyzes the attachment of glutamate to tRNA(Glu) in a two-step reaction: glutamate is first activated by ATP to form Glu-AMP and then transferred to the acceptor end of tRNA(Glu). The chain is Glutamate--tRNA ligase from Leifsonia xyli subsp. xyli (strain CTCB07).